The chain runs to 70 residues: Protein SlyX homolog (70 aa).

It belongs to the SlyX family.

The chain is Protein SlyX homolog from Nitrobacter winogradskyi (strain ATCC 25391 / DSM 10237 / CIP 104748 / NCIMB 11846 / Nb-255).